A 217-amino-acid polypeptide reads, in one-letter code: Protein-L-isoaspartate O-methyltransferase (217 aa).

Ser-64 is an active-site residue.

This sequence belongs to the methyltransferase superfamily. L-isoaspartyl/D-aspartyl protein methyltransferase family.

The protein localises to the cytoplasm. The enzyme catalyses [protein]-L-isoaspartate + S-adenosyl-L-methionine = [protein]-L-isoaspartate alpha-methyl ester + S-adenosyl-L-homocysteine. In terms of biological role, catalyzes the methyl esterification of L-isoaspartyl residues in peptides and proteins that result from spontaneous decomposition of normal L-aspartyl and L-asparaginyl residues. It plays a role in the repair and/or degradation of damaged proteins. This is Protein-L-isoaspartate O-methyltransferase from Rhodopseudomonas palustris (strain BisB5).